A 257-amino-acid polypeptide reads, in one-letter code: Ribonuclease PH (257 aa).

Phosphate contacts are provided by residues Arg88 and 126-128 (GTR).

It belongs to the RNase PH family. In terms of assembly, homohexameric ring arranged as a trimer of dimers.

It carries out the reaction tRNA(n+1) + phosphate = tRNA(n) + a ribonucleoside 5'-diphosphate. Functionally, phosphorolytic 3'-5' exoribonuclease that plays an important role in tRNA 3'-end maturation. Removes nucleotide residues following the 3'-CCA terminus of tRNAs; can also add nucleotides to the ends of RNA molecules by using nucleoside diphosphates as substrates, but this may not be physiologically important. Probably plays a role in initiation of 16S rRNA degradation (leading to ribosome degradation) during starvation. In Nocardia farcinica (strain IFM 10152), this protein is Ribonuclease PH.